A 95-amino-acid polypeptide reads, in one-letter code: Parvalbumin beta 3 (95 aa).

An N-acetylalanine modification is found at Ala1. EF-hand domains are found at residues 39-66 and 77-95; these read FFAIIDQDHSGFIEEDELKLFLQTFSAG and DVDGDGMIGVDEFVALVKA. The Ca(2+) site is built by Asp44, Asp46, Ser48, Phe50, Glu52, Glu55, Asp77, Asp79, Asp81, Met83, and Glu88.

It belongs to the parvalbumin family.

In terms of biological role, in muscle, parvalbumin is thought to be involved in relaxation after contraction. It binds two calcium ions. This chain is Parvalbumin beta 3, found in Merluccius paradoxus (Deep-water Cape hake).